The following is a 333-amino-acid chain: UDP-glucose 4-epimerase (333 aa).

NAD(+)-binding positions include 11-12 (YI), 32-37 (DSLVTG), 52-53 (DL), 75-79 (FAAYS), Asn-94, Thr-119, Tyr-143, Lys-147, and Phe-171. 2 residues coordinate substrate: Thr-119 and Tyr-143. Tyr-143 serves as the catalytic Proton acceptor. Substrate-binding positions include Asn-172, 191–192 (HL), 208–210 (MIF), Arg-223, and 284–287 (RSGD).

The protein belongs to the NAD(P)-dependent epimerase/dehydratase family. Homodimer. NAD(+) serves as cofactor.

The enzyme catalyses UDP-alpha-D-glucose = UDP-alpha-D-galactose. It functions in the pathway carbohydrate metabolism; galactose metabolism. Involved in the metabolism of galactose. Catalyzes the conversion of UDP-galactose (UDP-Gal) to UDP-glucose (UDP-Glc) through a mechanism involving the transient reduction of NAD. This is UDP-glucose 4-epimerase (galE) from Streptococcus mutans serotype c (strain ATCC 700610 / UA159).